A 586-amino-acid polypeptide reads, in one-letter code: GRB2-associated-binding protein 3 (586 aa).

One can recognise a PH domain in the interval 5–117 (DAVCTGWLVK…WVHSISQVCN (113 aa)). 2 disordered regions span residues 149–171 (AHAA…TEET) and 281–335 (SSTI…KKPE). The segment covering 283–292 (TIQVDKNQGS) has biased composition (polar residues). Positions 316–326 (HLSERRQEEWS) are enriched in basic and acidic residues. Phosphoserine is present on S344. A disordered region spans residues 401-453 (GASGLGPHCSPDDYIPMNSGSISSPLPELPANLEPPPVNRDLKPQRKSRPPPL). Phosphoserine is present on S482.

The protein belongs to the GAB family. In terms of assembly, interacts with PIK3R/p85, SHP2 and GRAP2/MONA. May interact with Grb2. In terms of processing, phosphorylated on tyrosine residue(s) after macrophage colony-stimulating factor (M-CSF) receptor stimulation.

The protein is GRB2-associated-binding protein 3 (GAB3) of Homo sapiens (Human).